The primary structure comprises 265 residues: GTP cyclohydrolase FolE2 (265 aa).

The protein belongs to the GTP cyclohydrolase IV family.

The catalysed reaction is GTP + H2O = 7,8-dihydroneopterin 3'-triphosphate + formate + H(+). It participates in cofactor biosynthesis; 7,8-dihydroneopterin triphosphate biosynthesis; 7,8-dihydroneopterin triphosphate from GTP: step 1/1. Functionally, converts GTP to 7,8-dihydroneopterin triphosphate. This Magnetococcus marinus (strain ATCC BAA-1437 / JCM 17883 / MC-1) protein is GTP cyclohydrolase FolE2.